The following is a 528-amino-acid chain: Na(+)/H(+) antiporter NhaB (528 aa).

Transmembrane regions (helical) follow at residues 23-43 (VAII…NPFV), 45-65 (GWLL…CYPL), 90-110 (LVAN…IYFM), 136-156 (CFAA…AVVI), 204-224 (LLMH…VGEP), 237-257 (FGEF…CGLI), 305-325 (GIIA…VGLI), 350-370 (EEAL…AVII), 392-412 (LALF…VFVG), 450-470 (ATPN…APLI), and 479-499 (VMAL…IMFF).

It belongs to the NhaB Na(+)/H(+) (TC 2.A.34) antiporter family.

It is found in the cell inner membrane. The enzyme catalyses 2 Na(+)(in) + 3 H(+)(out) = 2 Na(+)(out) + 3 H(+)(in). Its function is as follows. Na(+)/H(+) antiporter that extrudes sodium in exchange for external protons. Can also transport lithium and potassium. The polypeptide is Na(+)/H(+) antiporter NhaB (Vibrio parahaemolyticus serotype O3:K6 (strain RIMD 2210633)).